The chain runs to 209 residues: Uracil phosphoribosyltransferase (209 aa).

5-phospho-alpha-D-ribose 1-diphosphate contacts are provided by residues R79, R104, and 131-139 (DPMLATGGS). Uracil-binding positions include I194 and 199–201 (GDA). 5-phospho-alpha-D-ribose 1-diphosphate is bound at residue D200.

Belongs to the UPRTase family. Mg(2+) serves as cofactor.

It catalyses the reaction UMP + diphosphate = 5-phospho-alpha-D-ribose 1-diphosphate + uracil. It functions in the pathway pyrimidine metabolism; UMP biosynthesis via salvage pathway; UMP from uracil: step 1/1. Allosterically activated by GTP. Catalyzes the conversion of uracil and 5-phospho-alpha-D-ribose 1-diphosphate (PRPP) to UMP and diphosphate. The sequence is that of Uracil phosphoribosyltransferase from Clostridium perfringens (strain SM101 / Type A).